Here is a 187-residue protein sequence, read N- to C-terminus: Elongation factor P (187 aa).

This sequence belongs to the elongation factor P family.

The protein resides in the cytoplasm. Its pathway is protein biosynthesis; polypeptide chain elongation. In terms of biological role, involved in peptide bond synthesis. Stimulates efficient translation and peptide-bond synthesis on native or reconstituted 70S ribosomes in vitro. Probably functions indirectly by altering the affinity of the ribosome for aminoacyl-tRNA, thus increasing their reactivity as acceptors for peptidyl transferase. In Frankia casuarinae (strain DSM 45818 / CECT 9043 / HFP020203 / CcI3), this protein is Elongation factor P.